A 286-amino-acid polypeptide reads, in one-letter code: Shikimate dehydrogenase (NADP(+)) (286 aa).

Shikimate-binding positions include 22-24 (SRS) and Thr-71. The active-site Proton acceptor is the Lys-75. NADP(+) is bound at residue Glu-87. Shikimate is bound by residues Asn-96 and Asp-111. NADP(+)-binding positions include 136–140 (GAGGA), 160–165 (NRTVER), and Ile-225. Tyr-227 contacts shikimate. An NADP(+)-binding site is contributed by Gly-248.

This sequence belongs to the shikimate dehydrogenase family. As to quaternary structure, homodimer.

It catalyses the reaction shikimate + NADP(+) = 3-dehydroshikimate + NADPH + H(+). It functions in the pathway metabolic intermediate biosynthesis; chorismate biosynthesis; chorismate from D-erythrose 4-phosphate and phosphoenolpyruvate: step 4/7. Involved in the biosynthesis of the chorismate, which leads to the biosynthesis of aromatic amino acids. Catalyzes the reversible NADPH linked reduction of 3-dehydroshikimate (DHSA) to yield shikimate (SA). The polypeptide is Shikimate dehydrogenase (NADP(+)) (Rhizobium rhizogenes (strain K84 / ATCC BAA-868) (Agrobacterium radiobacter)).